The sequence spans 443 residues: Amino-acid acetyltransferase (443 aa).

Positions 296-435 (EQIRRATIND…KEMYNYQRRS (140 aa)) constitute an N-acetyltransferase domain.

This sequence belongs to the acetyltransferase family. ArgA subfamily. Homohexamer.

The protein resides in the cytoplasm. The enzyme catalyses L-glutamate + acetyl-CoA = N-acetyl-L-glutamate + CoA + H(+). Its pathway is amino-acid biosynthesis; L-arginine biosynthesis; N(2)-acetyl-L-ornithine from L-glutamate: step 1/4. This Enterobacter sp. (strain 638) protein is Amino-acid acetyltransferase.